The following is a 195-amino-acid chain: Peptidyl-tRNA hydrolase (195 aa).

Tyrosine 18 serves as a coordination point for tRNA. Residue histidine 23 is the Proton acceptor of the active site. Residues phenylalanine 69, asparagine 71, and asparagine 117 each contribute to the tRNA site.

The protein belongs to the PTH family. In terms of assembly, monomer.

It localises to the cytoplasm. The enzyme catalyses an N-acyl-L-alpha-aminoacyl-tRNA + H2O = an N-acyl-L-amino acid + a tRNA + H(+). Its function is as follows. Hydrolyzes ribosome-free peptidyl-tRNAs (with 1 or more amino acids incorporated), which drop off the ribosome during protein synthesis, or as a result of ribosome stalling. Functionally, catalyzes the release of premature peptidyl moieties from peptidyl-tRNA molecules trapped in stalled 50S ribosomal subunits, and thus maintains levels of free tRNAs and 50S ribosomes. The protein is Peptidyl-tRNA hydrolase of Hahella chejuensis (strain KCTC 2396).